Here is a 311-residue protein sequence, read N- to C-terminus: MNKYDLIERMNTRFAELEVTLHQLHQQLDDLPLIAARVFSLPEIEKGTEHQPIEQITVNITEGEHAKKLGLQHFQRLFLHHQGQHVSSKAALRLPGVLCFSVTDKELIECQDIIKKTNQLKAELEHIITVESGLPSEQRFEFVHTHLHGLITLNTYRTITPLINPSSVRFGWANKHIIKNVTREDILLQLEKSLNAGRAVPPFTREQWRELISLEINDVQRLPEKTRLKIKRPVKVQPIARVWYQEQQKQVQHPCPMPLIAFCQHQLGAELPKLGELTDYDVKHIKHKYKPDAKPLRLLVPRLHLYVELEP.

This sequence belongs to the Tus family.

It is found in the cytoplasm. Trans-acting protein required for termination of DNA replication. Binds to DNA replication terminator sequences (terA to terF) to prevent the passage of replication forks. The termination efficiency will be affected by the affinity of this protein for the terminator sequence. In Yersinia pestis, this protein is DNA replication terminus site-binding protein.